The sequence spans 319 residues: Beta-sarcoglycan (319 aa).

Positions 1–10 (MAAAAAAAAA) are enriched in low complexity. The segment at 1–33 (MAAAAAAAAAEQQSSNGPVKKSMREKAVERRNV) is disordered. At 1–66 (MAAAAAAAAA…GLRGRKGNLA (66 aa)) the chain is on the cytoplasmic side. Basic and acidic residues predominate over residues 22–33 (SMREKAVERRNV). A helical; Signal-anchor for type II membrane protein membrane pass occupies residues 67–87 (ICVIILLFILAVINLIITLVI). At 88–318 (WAVIRIGPNG…QISDNPCGNT (231 aa)) the chain is on the extracellular side. 3 N-linked (GlcNAc...) asparagine glycosylation sites follow: Asn159, Asn212, and Asn259. Disulfide bonds link Cys289-Cys315 and Cys291-Cys308.

Belongs to the sarcoglycan beta/delta/gamma/zeta family. As to quaternary structure, cross-link to form 2 major subcomplexes: one consisting of SGCB, SGCD and SGCG and the other consisting of SGCB and SGCD. The association between SGCB and SGCG is particularly strong while SGCA is loosely associated with the other sarcoglycans. In terms of processing, disulfide bonds are present.

It localises to the cell membrane. It is found in the sarcolemma. Its subcellular location is the cytoplasm. The protein resides in the cytoskeleton. In terms of biological role, component of the sarcoglycan complex, a subcomplex of the dystrophin-glycoprotein complex which forms a link between the F-actin cytoskeleton and the extracellular matrix. In Pongo abelii (Sumatran orangutan), this protein is Beta-sarcoglycan (SGCB).